The following is a 444-amino-acid chain: Chitinase-like protein Idgf5 (444 aa).

A signal peptide spans Met1–Ala26. Positions Gly29–Leu444 constitute a GH18 domain. A disulfide bond links Cys33 and Cys60. N-linked (GlcNAc...) asparagine glycosylation is found at Asn289 and Asn311. An intrachain disulfide couples Cys349 to Cys429.

The protein belongs to the glycosyl hydrolase 18 family. IDGF subfamily. In terms of processing, glycosylated.

It localises to the secreted. In terms of biological role, probably required to stimulate the proliferation, polarization and motility of imaginal disk cells. May act by stabilizing the binding of insulin-like peptides to its receptor through a simultaneous interaction with both molecules to form a multiprotein signaling complex. This is Chitinase-like protein Idgf5 (Idgf5) from Drosophila melanogaster (Fruit fly).